The following is a 316-amino-acid chain: UPF0761 membrane protein PM1616 (316 aa).

Transmembrane regions (helical) follow at residues 36–56 (MLALVPLVMVVFSVFSAFPVF), 92–112 (QMSAVGVISLVVVALMLINSI), 128–148 (LVFSFAIYWLILTLGPLLIGA), 172–192 (ILSFVPFFLTWLIFTLIYTVV), 204–224 (IGALVAAVFFTLGKQAFLWYV), and 236–256 (AMATLPIMLLWIQLSWVVILI).

It belongs to the UPF0761 family.

The protein localises to the cell inner membrane. The polypeptide is UPF0761 membrane protein PM1616 (Pasteurella multocida (strain Pm70)).